The following is a 120-amino-acid chain: Secreted RxLR effector protein 29 (120 aa).

Residues methionine 1–serine 21 form the signal peptide. The RxLR-dEER motif lies at arginine 47–lysine 64.

The protein belongs to the RxLR effector family.

The protein resides in the secreted. Its subcellular location is the host cytoplasm. The protein localises to the host nucleus. Effector that acts as a broad suppressor of cell death to interrupt plant immunity. Inhibits cell death induced by cell death-inducing proteins, including the PAMP elicitor INF1 from P.infestans. This is Secreted RxLR effector protein 29 from Plasmopara viticola (Downy mildew of grapevine).